We begin with the raw amino-acid sequence, 834 residues long: Structure-specific endonuclease subunit SLX4 (834 aa).

6 disordered regions span residues 80 to 105 (RVPR…KTTT), 272 to 307 (TVPA…QKGK), 332 to 372 (QNVA…GRPV), 401 to 421 (GYPE…SNSA), 603 to 649 (ESKP…AKAL), and 720 to 740 (ATPN…SIEP). Positions 279–295 (PTESSTTEDVQGSSSKQ) are enriched in polar residues. Over residues 296–305 (QRVKAKKPQK) the composition is skewed to basic residues. Polar residues-rich tracts occupy residues 345–366 (SNRP…TLKN) and 412–421 (DTQNSPSNSA). The span at 611 to 630 (DDARKNGFRKENHSDVRVRP) shows a compositional bias: basic and acidic residues. Residues 729-740 (QGSSSASFSIEP) show a composition bias toward low complexity.

The protein belongs to the SLX4 family. In terms of assembly, forms a heterodimer with SLX1. Phosphorylated in response to DNA damage.

The protein resides in the nucleus. Regulatory subunit of the SLX1-SLX4 structure-specific endonuclease that resolves DNA secondary structures generated during DNA repair and recombination. Has endonuclease activity towards branched DNA substrates, introducing single-strand cuts in duplex DNA close to junctions with ss-DNA. This Ajellomyces capsulatus (strain NAm1 / WU24) (Darling's disease fungus) protein is Structure-specific endonuclease subunit SLX4.